The sequence spans 221 residues: Large ribosomal subunit protein uL4 (221 aa).

The segment at 45–100 is disordered; sequence ARQGTHKTKNRGEVSGAGRKPFKQKGTGRARQGSIRAPQMTGGGIVHGPTPRDYSQ.

Belongs to the universal ribosomal protein uL4 family. As to quaternary structure, part of the 50S ribosomal subunit.

Functionally, one of the primary rRNA binding proteins, this protein initially binds near the 5'-end of the 23S rRNA. It is important during the early stages of 50S assembly. It makes multiple contacts with different domains of the 23S rRNA in the assembled 50S subunit and ribosome. Its function is as follows. Forms part of the polypeptide exit tunnel. The polypeptide is Large ribosomal subunit protein uL4 (Leifsonia xyli subsp. xyli (strain CTCB07)).